The following is a 445-amino-acid chain: C4-dicarboxylate transport protein (445 aa).

8 helical membrane passes run 24–44 (VLYIQVLIAIVLGVLVGWLSP), 62–82 (LIKMVIAPIIFCTVVSGIAHI), 105–125 (FALILGLVVGNLLPVGHGLAA), 163–183 (GDILQVLLFAILFGFALMALG), 201–221 (FGVIAIVMKAAPVGAFGAMAF), 237–257 (LVALFYATAALFVFVVLGVIA), 322–342 (IYMTLATLFIAQALGIELSFS), and 370–390 (AGTLAAVNPALVPGMAIVFSI).

Belongs to the dicarboxylate/amino acid:cation symporter (DAACS) (TC 2.A.23) family.

It localises to the cell inner membrane. In terms of biological role, responsible for the transport of dicarboxylates such as succinate, fumarate, and malate from the periplasm across the membrane. The chain is C4-dicarboxylate transport protein from Rhodopseudomonas palustris (strain HaA2).